The primary structure comprises 1131 residues: Phytochrome B1 (1131 aa).

Positions 1–11 (MASGSRTKHSY) are enriched in basic residues. Positions 1–26 (MASGSRTKHSYHNSSQGQAQSSGTSN) are disordered. Over residues 14 to 25 (SSQGQAQSSGTS) the composition is skewed to low complexity. One can recognise a GAF domain in the interval 229–408 (DIKLLCDTVV…AFGLQLNMEL (180 aa)). A phytochromobilin-binding site is contributed by Cys-334. 2 consecutive PAS domains span residues 622-693 (VARE…LRGV) and 756-808 (DYKA…GEIF). The 221-residue stretch at 904 to 1124 (YICQEVKSPL…MIILDLPMTR (221 aa)) folds into the Histidine kinase domain.

It belongs to the phytochrome family. Homodimer. Contains one covalently linked phytochromobilin chromophore.

Its function is as follows. Regulatory photoreceptor which exists in two forms that are reversibly interconvertible by light: the Pr form that absorbs maximally in the red region of the spectrum and the Pfr form that absorbs maximally in the far-red region. Photoconversion of Pr to Pfr induces an array of morphogenic responses, whereas reconversion of Pfr to Pr cancels the induction of those responses. Pfr controls the expression of a number of nuclear genes including those encoding the small subunit of ribulose-bisphosphate carboxylase, chlorophyll A/B binding protein, protochlorophyllide reductase, rRNA, etc. It also controls the expression of its own gene(s) in a negative feedback fashion. The protein is Phytochrome B1 of Solanum lycopersicum (Tomato).